A 331-amino-acid chain; its full sequence is tRNA-cytidine(32) 2-sulfurtransferase (331 aa).

The short motif at serine 71–serine 76 is the PP-loop motif element. [4Fe-4S] cluster is bound by residues cysteine 146, cysteine 149, and cysteine 237.

Belongs to the TtcA family. As to quaternary structure, homodimer. Requires Mg(2+) as cofactor. It depends on [4Fe-4S] cluster as a cofactor.

It localises to the cytoplasm. It catalyses the reaction cytidine(32) in tRNA + S-sulfanyl-L-cysteinyl-[cysteine desulfurase] + AH2 + ATP = 2-thiocytidine(32) in tRNA + L-cysteinyl-[cysteine desulfurase] + A + AMP + diphosphate + H(+). The protein operates within tRNA modification. In terms of biological role, catalyzes the ATP-dependent 2-thiolation of cytidine in position 32 of tRNA, to form 2-thiocytidine (s(2)C32). The sulfur atoms are provided by the cysteine/cysteine desulfurase (IscS) system. The sequence is that of tRNA-cytidine(32) 2-sulfurtransferase from Burkholderia multivorans (strain ATCC 17616 / 249).